Here is a 173-residue protein sequence, read N- to C-terminus: Large ribosomal subunit protein uL10 (173 aa).

The protein belongs to the universal ribosomal protein uL10 family. As to quaternary structure, part of the ribosomal stalk of the 50S ribosomal subunit. The N-terminus interacts with L11 and the large rRNA to form the base of the stalk. The C-terminus forms an elongated spine to which L12 dimers bind in a sequential fashion forming a multimeric L10(L12)X complex.

Its function is as follows. Forms part of the ribosomal stalk, playing a central role in the interaction of the ribosome with GTP-bound translation factors. The sequence is that of Large ribosomal subunit protein uL10 from Nitratidesulfovibrio vulgaris (strain ATCC 29579 / DSM 644 / CCUG 34227 / NCIMB 8303 / VKM B-1760 / Hildenborough) (Desulfovibrio vulgaris).